A 126-amino-acid chain; its full sequence is Large ribosomal subunit protein eL32 (126 aa).

This sequence belongs to the eukaryotic ribosomal protein eL32 family. Part of the 50S ribosomal subunit.

The chain is Large ribosomal subunit protein eL32 (rpl32e) from Thermococcus kodakarensis (strain ATCC BAA-918 / JCM 12380 / KOD1) (Pyrococcus kodakaraensis (strain KOD1)).